The primary structure comprises 501 residues: L-ornithine N(5)-monooxygenase (501 aa).

Residues 1–16 (MNGTSTTGNGFTNGTN) are compositionally biased toward low complexity. Positions 1 to 40 (MNGTSTTGNGFTNGTNYPVPKLELQPETTSTSPTRAQTHP) are disordered. Positions 26-37 (PETTSTSPTRAQ) are enriched in polar residues. FAD contacts are provided by residues 92–100 (EKQSNFAWH) and Gln111. Residue Lys116 participates in substrate binding. Val177 contacts FAD. 263–266 (SGQS) serves as a coordination point for NADP(+). Substrate-binding positions include 304–307 (NELF) and Asn334. Residue 334–336 (NYS) participates in NADP(+) binding. 476-478 (SLL) lines the FAD pocket. Ser479 is a binding site for substrate.

Belongs to the lysine N(6)-hydroxylase/L-ornithine N(5)-oxygenase family. Homotetramer. FAD serves as cofactor.

The enzyme catalyses L-ornithine + NADPH + O2 = N(5)-hydroxy-L-ornithine + NADP(+) + H2O. It carries out the reaction L-ornithine + NADH + O2 = N(5)-hydroxy-L-ornithine + NAD(+) + H2O. Its pathway is siderophore biosynthesis. Functionally, L-ornithine N(5)-monooxygenase; part of the siderophore biosynthetic pathway. Arthroderma benhamiae produces 2 types of extracellular siderophores, ferrichrome C and ferricrocin. The biosynthesis of these siderophores depends on the hydroxylation of ornithine to N(5)-hydroxyornithine, catalyzed by the monooxygenase sidA. The structure of ferricrocin differs from ferrichrome C only by a serine for alanine substitution and the assembly of both siderophores is suggested to be performed by the nonribosomal peptide synthase (NRPS) sidC. The protein is L-ornithine N(5)-monooxygenase of Arthroderma benhamiae (strain ATCC MYA-4681 / CBS 112371) (Trichophyton mentagrophytes).